The sequence spans 198 residues: MTTEKETATPADVEVASQEEQIDQTTEAQVEEPSIEAELAGCYAKIHELETYIAEADKREQDIQLRAQAEIQNIRRRTEQDIEKAHKFALEKFAKELLTVVDNLERGLVALDTAVTDEKTQALVDGVEMTHKEFVSTLAKFGIEAIGEIGDVFNPELHQAISMQPAENIEANHLSQVLQKGYTLQGRVIRPAMVMVAA.

Residues 1–32 form a disordered region; it reads MTTEKETATPADVEVASQEEQIDQTTEAQVEE.

The protein belongs to the GrpE family. In terms of assembly, homodimer.

Its subcellular location is the cytoplasm. In terms of biological role, participates actively in the response to hyperosmotic and heat shock by preventing the aggregation of stress-denatured proteins, in association with DnaK and GrpE. It is the nucleotide exchange factor for DnaK and may function as a thermosensor. Unfolded proteins bind initially to DnaJ; upon interaction with the DnaJ-bound protein, DnaK hydrolyzes its bound ATP, resulting in the formation of a stable complex. GrpE releases ADP from DnaK; ATP binding to DnaK triggers the release of the substrate protein, thus completing the reaction cycle. Several rounds of ATP-dependent interactions between DnaJ, DnaK and GrpE are required for fully efficient folding. The sequence is that of Protein GrpE from Haemophilus ducreyi (strain 35000HP / ATCC 700724).